Consider the following 143-residue polypeptide: Hemoglobin cathodic subunit alpha (143 aa).

S2 bears the N-acetylserine mark. One can recognise a Globin domain in the interval 2 to 143; sequence SLTAKDKTLV…VSAALADKYR (142 aa). H59 serves as a coordination point for O2. Residue H89 participates in heme b binding.

The protein belongs to the globin family. In terms of assembly, heterotetramer of two alpha chains and two beta chains. As to expression, red blood cells.

Its function is as follows. Involved in oxygen transport from the gills to the various peripheral tissues. In Conger conger (Conger eel), this protein is Hemoglobin cathodic subunit alpha.